Here is a 145-residue protein sequence, read N- to C-terminus: Hemoglobin subunit beta (145 aa).

A Globin domain is found at 1-145; that stretch reads MLTAEEKAAV…VANALAHRYH (145 aa). T11 is modified (phosphothreonine). Phosphoserine is present on S43. An N6-acetyllysine modification is found at K58. Heme b is bound at residue H62. Residue K81 is modified to N6-acetyllysine. Residue H91 participates in heme b binding. C92 carries the S-nitrosocysteine modification.

It belongs to the globin family. In terms of assembly, heterotetramer of two alpha chains and two beta chains. In terms of tissue distribution, red blood cells.

Functionally, involved in oxygen transport from the lung to the various peripheral tissues. In Bos mutus grunniens (Wild yak), this protein is Hemoglobin subunit beta (HBB).